The primary structure comprises 995 residues: UPF0182 protein NFA_45260 (995 aa).

7 helical membrane-spanning segments follow: residues 18–38 (VLLV…RFTD), 63–83 (IILF…ALLL), 115–135 (FGIG…QSNW), 176–196 (FVAV…FGGL), 211–231 (IQLA…YWFD), 260–280 (KLIL…GVVL), and 288–308 (MAAA…PLVV). The segment at 904 to 957 (ATPFGGDPATRPQPGTAPPVVDSTQPPADGGTPQPQTTPPPTGSAAKDAAAAEL) is disordered. Composition is skewed to low complexity over residues 927–938 (TQPPADGGTPQP) and 946–955 (GSAAKDAAAA).

This sequence belongs to the UPF0182 family.

It is found in the cell membrane. The polypeptide is UPF0182 protein NFA_45260 (Nocardia farcinica (strain IFM 10152)).